Here is a 297-residue protein sequence, read N- to C-terminus: Protease HtpX homolog (297 aa).

2 consecutive transmembrane segments (helical) span residues 14 to 34 (VILLFAFFVLLVVIGAAAGYL) and 39 to 59 (YQLGAAFALIIGAIYAFSMIF). Residue His143 participates in Zn(2+) binding. Glu144 is an active-site residue. His147 contributes to the Zn(2+) binding site. The next 2 helical transmembrane spans lie at 158–178 (IAVALASAVTLISSIGGRMMW) and 193–213 (GFGAIMLIFSILSLILAPLAA). Zn(2+) is bound at residue Glu225.

Belongs to the peptidase M48B family. Zn(2+) serves as cofactor.

It is found in the cell membrane. This is Protease HtpX homolog from Streptococcus equi subsp. zooepidemicus (strain MGCS10565).